The primary structure comprises 574 residues: Pyruvate kinase PKLR (574 aa).

A phosphoserine mark is found at Ser-2, Ser-19, Ser-26, and Ser-43. Residue Arg-116 participates in substrate binding. K(+) is bound by residues Asn-118, Ser-120, Asp-156, and Thr-157. 118-121 (NFSH) contacts ATP. ATP contacts are provided by Arg-163 and Lys-250. Residue Ser-292 is modified to Phosphoserine. Position 313 (Lys-313) interacts with substrate. Glu-315 provides a ligand contact to Mn(2+). Substrate-binding residues include Gly-338, Asp-339, and Thr-371. Asp-339 contacts Mn(2+). Beta-D-fructose 1,6-bisphosphate contacts are provided by residues 475–480 (TKTGRS), Trp-525, Arg-532, and 559–564 (RPGSGY).

The protein belongs to the pyruvate kinase family. Homotetramer. The cofactor is Mg(2+). Requires Mn(2+) as cofactor. It depends on K(+) as a cofactor.

The enzyme catalyses pyruvate + ATP = phosphoenolpyruvate + ADP + H(+). It participates in carbohydrate degradation; glycolysis; pyruvate from D-glyceraldehyde 3-phosphate: step 5/5. With respect to regulation, allosterically activated by fructose 1,6-bisphosphate. In terms of biological role, pyruvate kinase that catalyzes the conversion of phosphoenolpyruvate to pyruvate with the synthesis of ATP, and which plays a key role in glycolysis. This Rattus norvegicus (Rat) protein is Pyruvate kinase PKLR (Pklr).